We begin with the raw amino-acid sequence, 414 residues long: MANSC domain-containing protein 1 (414 aa).

The first 24 residues, 1–24, serve as a signal peptide directing secretion; it reads MLFRGTSLAYSLLVISFLTPRSSA. Topologically, residues 25–369 are extracellular; sequence GQNCLTKSLE…HGLSFEKWLL (345 aa). The MANSC domain occupies 32–116; that stretch reads SLEDVVIDIQ…LKPAKGLVTY (85 aa). Residues Asn-128, Asn-234, and Asn-335 are each glycosylated (N-linked (GlcNAc...) asparagine). The disordered stretch occupies residues 311–339; it reads FQGGSTLTSDPRHGKSSTSESSITNKTAS. The span at 326–338 shows a compositional bias: polar residues; the sequence is SSTSESSITNKTA. The helical transmembrane segment at 370 to 392 threads the bilayer; it reads IGTLLCGVLFLVIGLVLLGRMLV. Residues 393–414 lie on the Cytoplasmic side of the membrane; that stretch reads EALRRKRYSRLDYLINGIYVDI.

The protein resides in the membrane. This Mus musculus (Mouse) protein is MANSC domain-containing protein 1 (Mansc1).